A 273-amino-acid polypeptide reads, in one-letter code: Ribosomal RNA small subunit methyltransferase A (273 aa).

Asn18, Leu20, Gly45, Glu66, Asp91, and Asn113 together coordinate S-adenosyl-L-methionine.

The protein belongs to the class I-like SAM-binding methyltransferase superfamily. rRNA adenine N(6)-methyltransferase family. RsmA subfamily.

The protein resides in the cytoplasm. The catalysed reaction is adenosine(1518)/adenosine(1519) in 16S rRNA + 4 S-adenosyl-L-methionine = N(6)-dimethyladenosine(1518)/N(6)-dimethyladenosine(1519) in 16S rRNA + 4 S-adenosyl-L-homocysteine + 4 H(+). In terms of biological role, specifically dimethylates two adjacent adenosines (A1518 and A1519) in the loop of a conserved hairpin near the 3'-end of 16S rRNA in the 30S particle. May play a critical role in biogenesis of 30S subunits. The chain is Ribosomal RNA small subunit methyltransferase A from Salmonella typhimurium (strain LT2 / SGSC1412 / ATCC 700720).